The chain runs to 94 residues: Antitoxin HipB (94 aa).

The HTH cro/C1-type domain maps to 23 to 77 (MKLVRQQNGWTQSELAKKIGIKQATISNFENNPDNTSLTTFFKILQSLELSMTLC). A DNA-binding region (H-T-H motif) is located at residues 34–53 (QSELAKKIGIKQATISNFEN).

As to quaternary structure, homodimer. Forms a HipA(2)HipB(2) heterotetramer which can interact with DNA. This complex also blocks the toxic activity of HipA.

Functionally, antitoxin component of a type II type II toxin-antitoxin (TA) system. Neutralizes the toxic effect of cognate toxin HipA. Represses the hipBA operon promoter. This Escherichia coli O6:H1 (strain CFT073 / ATCC 700928 / UPEC) protein is Antitoxin HipB (hipB).